Reading from the N-terminus, the 603-residue chain is Vacuolar protein sorting-associated protein 33A (603 aa).

The protein belongs to the STXBP/unc-18/SEC1 family. Probable component of the homotypic fusion and vacuole protein sorting (HOPS) complex consisting of the core class C Vps proteins vps-11, vps-16, vps-18, and which further associates with vps-33.1, vps-39 and vps-41. Interacts with spe-39. In terms of tissue distribution, ubiquitously expressed at high levels in somatic tissues including the pharynx, muscles, hypodermis, neurons, coelomocytes and spermatheca. Expressed in the intestine.

The protein localises to the lysosome. It localises to the early endosome. Its subcellular location is the late endosome. The protein resides in the apical cell membrane. In terms of biological role, plays a role in vesicle-mediated protein trafficking to lysosomal compartments including the endocytic membrane transport pathways. Believed to act as a component of the putative HOPS endosomal tethering complex which is proposed to be involved in the rab-5-to-rab-7 endosome conversion probably implicating sand-1, and via binding SNAREs and SNARE complexes to mediate tethering and docking events during SNARE-mediated membrane fusion. The HOPS complex is proposed to be recruited to rab-7 on the late endosomal membrane and to regulate late endocytic, phagocytic and autophagic traffic towards lysosomes. Within the HOPS complex, contributes to the normal development of gut granules in embryonic and adult intestinal cells. Required for endosome/lysosome fusion. Required for early embryonic development. The polypeptide is Vacuolar protein sorting-associated protein 33A (Caenorhabditis elegans).